Reading from the N-terminus, the 223-residue chain is DnaJ homolog subfamily B member 9 (223 aa).

An N-terminal signal peptide occupies residues methionine 1–alanine 23. The J domain occupies serine 26–glycine 90. The divergent targeting domain stretch occupies residues histidine 91–glutamine 223. Serine 133 is modified (phosphoserine).

Interacts with HSPA5/BiP; interaction is direct. Interacts with ERN1/IRE1 (via the luminal region). Interacts with DERL1. In terms of tissue distribution, widely expressed. Expressed at highest level in the liver, placenta and kidney.

The protein resides in the endoplasmic reticulum lumen. Co-chaperone for Hsp70 protein HSPA5/BiP that acts as a key repressor of the ERN1/IRE1-mediated unfolded protein response (UPR). J domain-containing co-chaperones stimulate the ATPase activity of Hsp70 proteins and are required for efficient substrate recognition by Hsp70 proteins. In the unstressed endoplasmic reticulum, interacts with the luminal region of ERN1/IRE1 and selectively recruits HSPA5/BiP: HSPA5/BiP disrupts the dimerization of the active ERN1/IRE1 luminal region, thereby inactivating ERN1/IRE1. Also involved in endoplasmic reticulum-associated degradation (ERAD) of misfolded proteins. Required for survival of B-cell progenitors and normal antibody production. The protein is DnaJ homolog subfamily B member 9 (DNAJB9) of Homo sapiens (Human).